The following is a 466-amino-acid chain: Asparagine--tRNA ligase (466 aa).

It belongs to the class-II aminoacyl-tRNA synthetase family. In terms of assembly, homodimer.

It localises to the cytoplasm. It catalyses the reaction tRNA(Asn) + L-asparagine + ATP = L-asparaginyl-tRNA(Asn) + AMP + diphosphate + H(+). In Shewanella sp. (strain MR-4), this protein is Asparagine--tRNA ligase.